Reading from the N-terminus, the 464-residue chain is Alpha-amylase (464 aa).

Residues methionine 1–alanine 21 form the signal peptide. Residues histidine 107 and arginine 213 each contribute to the substrate site. The active-site Nucleophile is aspartate 215. Lysine 218–histidine 219 is a binding site for substrate. Glutamate 242 functions as the Proton donor in the catalytic mechanism. Positions 247 and 313 each coordinate substrate.

It belongs to the glycosyl hydrolase 13 family.

It localises to the secreted. The catalysed reaction is Endohydrolysis of (1-&gt;4)-alpha-D-glucosidic linkages in polysaccharides containing three or more (1-&gt;4)-alpha-linked D-glucose units.. The sequence is that of Alpha-amylase from Aeromonas hydrophila.